Consider the following 449-residue polypeptide: UDP-N-acetylmuramoylalanine--D-glutamate ligase (449 aa).

An ATP-binding site is contributed by 118 to 124 (GTNGKTT).

It belongs to the MurCDEF family.

It localises to the cytoplasm. It catalyses the reaction UDP-N-acetyl-alpha-D-muramoyl-L-alanine + D-glutamate + ATP = UDP-N-acetyl-alpha-D-muramoyl-L-alanyl-D-glutamate + ADP + phosphate + H(+). Its pathway is cell wall biogenesis; peptidoglycan biosynthesis. Functionally, cell wall formation. Catalyzes the addition of glutamate to the nucleotide precursor UDP-N-acetylmuramoyl-L-alanine (UMA). This Staphylococcus aureus (strain MRSA252) protein is UDP-N-acetylmuramoylalanine--D-glutamate ligase.